We begin with the raw amino-acid sequence, 368 residues long: Alanine racemase (368 aa).

Lys-40 acts as the Proton acceptor; specific for D-alanine in catalysis. Residue Lys-40 is modified to N6-(pyridoxal phosphate)lysine. Arg-134 lines the substrate pocket. Residue Tyr-263 is the Proton acceptor; specific for L-alanine of the active site. Met-310 serves as a coordination point for substrate.

Belongs to the alanine racemase family. The cofactor is pyridoxal 5'-phosphate.

It catalyses the reaction L-alanine = D-alanine. It participates in amino-acid biosynthesis; D-alanine biosynthesis; D-alanine from L-alanine: step 1/1. Its function is as follows. Catalyzes the interconversion of L-alanine and D-alanine. May also act on other amino acids. This chain is Alanine racemase (alr), found in Listeria monocytogenes serotype 1/2a (strain 10403S).